The following is a 692-amino-acid chain: Alpha-amylase SusG (692 aa).

An N-terminal signal peptide occupies residues 1–22 (MNKHLHFLSLLWLSMLMAFMTA). Residue Cys23 is the site of N-palmitoyl cysteine attachment. The S-diacylglycerol cysteine moiety is linked to residue Cys23. Residues Asp73, Asp75, Asp77, Tyr79, and Asp81 each contribute to the Mg(2+) site. A Ca(2+)-binding site is contributed by Asn153. 3 starch binding regions span residues His154, 260 to 263 (YYGE), and 330 to 333 (NIMF). A Ca(2+)-binding site is contributed by Asp352. The segment at 386-392 (RLDAVKH) is starch binding. The active-site Nucleophile is the Asp388. His392 contributes to the Ca(2+) binding site. Glu431 acts as the Proton donor in catalysis. Residues Asp437 and Arg457 are each a region of interest (starch binding).

This sequence belongs to the glycosyl hydrolase 13 family. As to quaternary structure, monomer. Ca(2+) is required as a cofactor.

The protein localises to the cell outer membrane. The catalysed reaction is Endohydrolysis of (1-&gt;4)-alpha-D-glucosidic linkages in polysaccharides containing three or more (1-&gt;4)-alpha-linked D-glucose units.. The protein operates within glycan degradation; starch degradation. In terms of biological role, alpha-amylase that cleaves starch into oligosaccharides before internalization for degradation, the first step in starch degradation. This is Alpha-amylase SusG (susG) from Bacteroides thetaiotaomicron (strain ATCC 29148 / DSM 2079 / JCM 5827 / CCUG 10774 / NCTC 10582 / VPI-5482 / E50).